The sequence spans 448 residues: C4-dicarboxylate transport protein (448 aa).

9 consecutive transmembrane segments (helical) span residues 9–29 (SLYF…HFYP), 59–79 (LIKM…IAGM), 91–111 (VALL…LLVI), 159–179 (AFAN…GFAL), 203–223 (IVNM…AFTI), 237–257 (LIIC…GTIS), 312–332 (GYSF…IFIA), 345–365 (ITLL…TGSG), and 367–387 (IVMA…LALI).

This sequence belongs to the dicarboxylate/amino acid:cation symporter (DAACS) (TC 2.A.23) family.

The protein localises to the cell inner membrane. Its function is as follows. Responsible for the transport of dicarboxylates such as succinate, fumarate, and malate from the periplasm across the membrane. This Acinetobacter baylyi (strain ATCC 33305 / BD413 / ADP1) protein is C4-dicarboxylate transport protein.